The primary structure comprises 593 residues: MDPPAAVLLPPQSRTCTHLAEETCMDQERSPATAEAGRDSFPSGQLPSSSLTEADWFWDEHIQAKRARVETIVRGMCLSPSSSVSGRARESLRCPEKGRERKRKQSLPMHQGPLKSSPAWERGPKKGGTRVKEQLHLLKQQLRHLQEHVLQATEPRAPAQSPGGTEPRSSPRARPRNSCSSGAWTVENEPHQSSSKDLCGAVKPGAAEVLQYSEEPMLCPSGPRALVETLRKELSRAVSQAVDSVLQQVLFDPQRHLTQQERSCQGLASEGRNQPSPPGRSAYKDPLALATLPRKIQPQAGVPLGNSTLARPLDSPMCPVSPRGVPRSYQSPLPNCPLTNVPSHTWENQMLRQLLGRGPDGQWSGSPPQDAAFQSHTSPESAQQPWGLSQQQLPLSLTPVHLESRPLPPPVKMEQGVLRGVADSLPFSSIHIQEGLSPGHLKKAKLMFFFTRYPSSSLLKAYFPDVQFNRCITSQMIKWFSNFREFYYIQMEKYARQALSDGITNAQALAVLRDSELFRVLNTHYNKGNDFEVPDCFLEIAALTLKEFFRAVLAGKDSDPSWKKPIYKVISKLDSDVPEMLKSPSFLPGLFPS.

Disordered stretches follow at residues 24–48 (CMDQERSPATAEAGRDSFPSGQLPS), 79–130 (SPSS…GGTR), 153–199 (TEPR…KDLC), 260–284 (QERSCQGLASEGRNQPSPPGRSAYK), 298–333 (PQAGVPLGNSTLARPLDSPMCPVSPRGVPRSYQSPL), and 356–388 (GRGPDGQWSGSPPQDAAFQSHTSPESAQQPWGL). Over residues 87-99 (RARESLRCPEKGR) the composition is skewed to basic and acidic residues. Residues 167 to 181 (PRSSPRARPRNSCSS) show a composition bias toward low complexity. A compositionally biased stretch (polar residues) spans 363 to 380 (WSGSPPQDAAFQSHTSPE). The 59-residue stretch at 433 to 491 (QEGLSPGHLKKAKLMFFFTRYPSSSLLKAYFPDVQFNRCITSQMIKWFSNFREFYYIQM) folds into the Prospero-type homeo domain. Positions 433 to 591 (QEGLSPGHLK…KSPSFLPGLF (159 aa)) are homeo-Prospero. The region spanning 492 to 591 (EKYARQALSD…KSPSFLPGLF (100 aa)) is the Prospero domain.

The protein belongs to the Prospero homeodomain family. As to expression, expressed in testis.

The protein localises to the nucleus. Functionally, transcription regulator. Does not seem to be essential for embryonic development and postnatal survival. The chain is Prospero homeobox protein 2 (Prox2) from Mus musculus (Mouse).